Here is a 291-residue protein sequence, read N- to C-terminus: Pyridoxal 5'-phosphate synthase subunit PdxS (291 aa).

A D-ribose 5-phosphate-binding site is contributed by Asp-23. The active-site Schiff-base intermediate with D-ribose 5-phosphate is Lys-80. Residue Gly-152 coordinates D-ribose 5-phosphate. D-glyceraldehyde 3-phosphate is bound at residue Arg-164. Residues Gly-213 and 234–235 (GS) each bind D-ribose 5-phosphate.

It belongs to the PdxS/SNZ family. In the presence of PdxT, forms a dodecamer of heterodimers.

It catalyses the reaction aldehydo-D-ribose 5-phosphate + D-glyceraldehyde 3-phosphate + L-glutamine = pyridoxal 5'-phosphate + L-glutamate + phosphate + 3 H2O + H(+). It functions in the pathway cofactor biosynthesis; pyridoxal 5'-phosphate biosynthesis. Its function is as follows. Catalyzes the formation of pyridoxal 5'-phosphate from ribose 5-phosphate (RBP), glyceraldehyde 3-phosphate (G3P) and ammonia. The ammonia is provided by the PdxT subunit. Can also use ribulose 5-phosphate and dihydroxyacetone phosphate as substrates, resulting from enzyme-catalyzed isomerization of RBP and G3P, respectively. The sequence is that of Pyridoxal 5'-phosphate synthase subunit PdxS from Haemophilus influenzae (strain PittGG).